The following is a 284-amino-acid chain: MNNQIIKINDIELANNKPFVLFGGINVLESRDLAMRVAEHYVEVTTKLNIPYVFKASFDKANRSSINSYRGPGLDEGLKIFEEIKKTFNIPLITDVHEPHQAAPVAEVVDVIQLPAFLARQTDLVVAMAKTGAIINVKKPQFLAPHEMRHIITKFNEAGNNNVALCERGSSFGYNNLVVDMLGMDDMKVMAPVIFDATHALQRPGGRADSADGRRAQAAELARSGMALGIAGLFIEAHPNPNEAKCDGPCALALSKLEGYLTQMKAVDDLIKSFAPLDTSASDL.

It belongs to the KdsA family.

It is found in the cytoplasm. The enzyme catalyses D-arabinose 5-phosphate + phosphoenolpyruvate + H2O = 3-deoxy-alpha-D-manno-2-octulosonate-8-phosphate + phosphate. Its pathway is carbohydrate biosynthesis; 3-deoxy-D-manno-octulosonate biosynthesis; 3-deoxy-D-manno-octulosonate from D-ribulose 5-phosphate: step 2/3. It functions in the pathway bacterial outer membrane biogenesis; lipopolysaccharide biosynthesis. The sequence is that of 2-dehydro-3-deoxyphosphooctonate aldolase from Pseudoalteromonas translucida (strain TAC 125).